Consider the following 311-residue polypeptide: Thioredoxin reductase (311 aa).

35-42 (ERGIPGGQ) is a binding site for FAD. A disulfide bond links Cys-134 and Cys-137. Residue 277 to 286 (DVRDKGLRQI) participates in FAD binding.

It belongs to the class-II pyridine nucleotide-disulfide oxidoreductase family. In terms of assembly, homodimer. Requires FAD as cofactor.

The protein localises to the cytoplasm. It catalyses the reaction [thioredoxin]-dithiol + NADP(+) = [thioredoxin]-disulfide + NADPH + H(+). This chain is Thioredoxin reductase (trxB), found in Staphylococcus aureus (strain MRSA252).